The chain runs to 374 residues: Acetylxylan esterase (374 aa).

The signal sequence occupies residues 1–22 (MVFSPRLSAFVALVALTNAATA). The CBM1 domain occupies 23 to 57 (VPMYGQCGGSGYTGPTQCDPGLVCVKLNDWYSQCQ). The segment at 58–99 (SGGAQPPVTTTSSPPVTVSPPPSTTTVAPPVATGPPAPEIPA) is ser/Thr/Pro-rich linker. A disordered region spans residues 60–86 (GAQPPVTTTSSPPVTVSPPPSTTTVAP). Low complexity predominate over residues 63 to 73 (PPVTTTSSPPV). The segment at 100–374 (GQLTQLRSFG…EVVAMDFFGL (275 aa)) is catalytic. A glycan (N-linked (GlcNAc...) asparagine) is linked at N114. The active-site Charge relay system is the S219. N320 is a glycosylation site (N-linked (GlcNAc...) asparagine).

This sequence belongs to the carbohydrate esterase 1 (CE1) family. AxeA subfamily. In terms of assembly, monomer. Post-translationally, glycosylated.

It is found in the secreted. It carries out the reaction Deacetylation of xylans and xylo-oligosaccharides.. Its pathway is glycan degradation; xylan degradation. In terms of biological role, acetylxylan esterase involved in the hydrolysis of xylan, a major structural heterogeneous polysaccharide found in plant biomass representing the second most abundant polysaccharide in the biosphere, after cellulose. Degrades acetylated xylans by cleaving acetyl side groups from the hetero-xylan backbone. This chain is Acetylxylan esterase, found in Coprinopsis cinerea (strain Okayama-7 / 130 / ATCC MYA-4618 / FGSC 9003) (Inky cap fungus).